The sequence spans 270 residues: Putative pyruvate, phosphate dikinase regulatory protein 2 (270 aa).

151-158 (GVSRTSKT) provides a ligand contact to ADP.

Belongs to the pyruvate, phosphate/water dikinase regulatory protein family. PDRP subfamily.

The enzyme catalyses N(tele)-phospho-L-histidyl/L-threonyl-[pyruvate, phosphate dikinase] + ADP = N(tele)-phospho-L-histidyl/O-phospho-L-threonyl-[pyruvate, phosphate dikinase] + AMP + H(+). It catalyses the reaction N(tele)-phospho-L-histidyl/O-phospho-L-threonyl-[pyruvate, phosphate dikinase] + phosphate + H(+) = N(tele)-phospho-L-histidyl/L-threonyl-[pyruvate, phosphate dikinase] + diphosphate. In terms of biological role, bifunctional serine/threonine kinase and phosphorylase involved in the regulation of the pyruvate, phosphate dikinase (PPDK) by catalyzing its phosphorylation/dephosphorylation. The chain is Putative pyruvate, phosphate dikinase regulatory protein 2 from Listeria innocua serovar 6a (strain ATCC BAA-680 / CLIP 11262).